Reading from the N-terminus, the 247-residue chain is ATP synthase subunit a, chloroplastic (247 aa).

Transmembrane regions (helical) follow at residues 38-58 (QVLI…TIAV), 95-115 (VPFI…GALL), 134-154 (INTT…AGLT), 199-219 (LVVV…VMFL), and 220-240 (GLFT…AYIG).

This sequence belongs to the ATPase A chain family. F-type ATPases have 2 components, CF(1) - the catalytic core - and CF(0) - the membrane proton channel. CF(1) has five subunits: alpha(3), beta(3), gamma(1), delta(1), epsilon(1). CF(0) has four main subunits: a, b, b' and c.

The protein localises to the plastid. It localises to the chloroplast thylakoid membrane. Key component of the proton channel; it plays a direct role in the translocation of protons across the membrane. The chain is ATP synthase subunit a, chloroplastic from Buxus microphylla (Littleleaf boxwood).